We begin with the raw amino-acid sequence, 496 residues long: Germacrene A hydroxylase (496 aa).

Over 1–2 (ME) the chain is Cytoplasmic. The helical; Signal-anchor for type II membrane protein transmembrane segment at 3–23 (LTLTTSLGLAVFVFILFKLLT) threads the bilayer. The Lumenal segment spans residues 24 to 496 (GSKSTKNSLP…TAYKTANNSA (473 aa)). Cys-432 is a heme binding site. Asn-493 carries an N-linked (GlcNAc...) asparagine glycan.

It belongs to the cytochrome P450 family. The cofactor is heme.

It localises to the endoplasmic reticulum membrane. The enzyme catalyses (+)-(R)-germacrene A + 3 reduced [NADPH--hemoprotein reductase] + 3 O2 = germacra-1(10),4,11(13)-trien-12-oate + 3 oxidized [NADPH--hemoprotein reductase] + 4 H2O + 4 H(+). It participates in secondary metabolite biosynthesis; terpenoid biosynthesis. Involved in the biosynthesis of germacrene-derived sesquiterpene lactones. Catalyzes three consecutive oxidations of germacrene A to produce germacrene A acid. Could also catalyze the three-step oxidation of non-natural substrate amorphadiene to artemisinic acid. The sequence is that of Germacrene A hydroxylase from Barnadesia spinosa (Spiny barnadesia).